Here is a 122-residue protein sequence, read N- to C-terminus: Large ribosomal subunit protein uL14 (122 aa).

Belongs to the universal ribosomal protein uL14 family. Part of the 50S ribosomal subunit. Forms a cluster with proteins L3 and L19. In the 70S ribosome, L14 and L19 interact and together make contacts with the 16S rRNA in bridges B5 and B8.

In terms of biological role, binds to 23S rRNA. Forms part of two intersubunit bridges in the 70S ribosome. The chain is Large ribosomal subunit protein uL14 from Burkholderia multivorans (strain ATCC 17616 / 249).